Here is a 339-residue protein sequence, read N- to C-terminus: Phenylalanine--tRNA ligase alpha subunit (339 aa).

Glu-250 provides a ligand contact to Mg(2+).

It belongs to the class-II aminoacyl-tRNA synthetase family. Phe-tRNA synthetase alpha subunit type 1 subfamily. In terms of assembly, tetramer of two alpha and two beta subunits. It depends on Mg(2+) as a cofactor.

It is found in the cytoplasm. It catalyses the reaction tRNA(Phe) + L-phenylalanine + ATP = L-phenylalanyl-tRNA(Phe) + AMP + diphosphate + H(+). The chain is Phenylalanine--tRNA ligase alpha subunit from Flavobacterium johnsoniae (strain ATCC 17061 / DSM 2064 / JCM 8514 / BCRC 14874 / CCUG 350202 / NBRC 14942 / NCIMB 11054 / UW101) (Cytophaga johnsonae).